Here is a 411-residue protein sequence, read N- to C-terminus: Snake venom metalloproteinase ACLF (411 aa).

Positions 1 to 20 (MIQVLLVTLCLAAFPYQGSS) are cleaved as a signal peptide. The propeptide occupies 21–189 (IILESGNVND…KKAFQLNLTP (169 aa)). The region spanning 197–393 (RYVELVIVAD…NNPQCILNKP (197 aa)) is the Peptidase M12B domain. Residues E200 and D284 each coordinate Ca(2+). 3 cysteine pairs are disulfide-bonded: C308–C388, C348–C372, and C350–C355. H333 contacts Zn(2+). E334 is a catalytic residue. The Zn(2+) site is built by H337 and H343. Positions 388, 391, 403, 406, 408, and 410 each coordinate Ca(2+).

The protein belongs to the venom metalloproteinase (M12B) family. P-I subfamily. As to quaternary structure, monomer. Zn(2+) serves as cofactor. Expressed by the venom gland.

The protein localises to the secreted. Its activity is regulated as follows. Inhibited by EDTA and 1,10-phenanthroline, but not by PMSF. Functionally, snake venom zinc metalloprotease that has fibrinolytic activity. The recombinant enzyme cleaves both alpha- and beta-chains of fibrinogen, but not the gamma-chain. The recombinant protein does not produce hemorrhage in mice. Cleaves the peptide substrate Abz-LVEALYQ-EDDnp at the Ala-Leu bond in vitro. This Agkistrodon contortrix laticinctus (Broad-banded copperhead) protein is Snake venom metalloproteinase ACLF (ACLPREF).